The following is a 554-amino-acid chain: 3-(3-hydroxy-phenyl)propionate/3-hydroxycinnamic acid hydroxylase (554 aa).

FAD-binding positions include 17 to 46 (QVAI…VVEK) and 285 to 295 (FRIDRVLLAGD).

It belongs to the PheA/TfdB FAD monooxygenase family. FAD is required as a cofactor.

It catalyses the reaction 3-(3-hydroxyphenyl)propanoate + NADH + O2 + H(+) = 3-(2,3-dihydroxyphenyl)propanoate + NAD(+) + H2O. It carries out the reaction (2E)-3-(3-hydroxyphenyl)prop-2-enoate + NADH + O2 + H(+) = (2E)-3-(2,3-dihydroxyphenyl)prop-2-enoate + NAD(+) + H2O. It functions in the pathway aromatic compound metabolism; 3-phenylpropanoate degradation. In terms of biological role, catalyzes the insertion of one atom of molecular oxygen into position 2 of the phenyl ring of 3-(3-hydroxyphenyl)propionate (3-HPP) and hydroxycinnamic acid (3HCI). This is 3-(3-hydroxy-phenyl)propionate/3-hydroxycinnamic acid hydroxylase from Escherichia coli (strain 55989 / EAEC).